A 463-amino-acid chain; its full sequence is ATP synthase subunit beta (463 aa).

153-160 (GGAGVGKT) contacts ATP.

It belongs to the ATPase alpha/beta chains family. As to quaternary structure, F-type ATPases have 2 components, CF(1) - the catalytic core - and CF(0) - the membrane proton channel. CF(1) has five subunits: alpha(3), beta(3), gamma(1), delta(1), epsilon(1). CF(0) has three main subunits: a(1), b(2) and c(9-12). The alpha and beta chains form an alternating ring which encloses part of the gamma chain. CF(1) is attached to CF(0) by a central stalk formed by the gamma and epsilon chains, while a peripheral stalk is formed by the delta and b chains.

The protein localises to the cell inner membrane. It carries out the reaction ATP + H2O + 4 H(+)(in) = ADP + phosphate + 5 H(+)(out). In terms of biological role, produces ATP from ADP in the presence of a proton gradient across the membrane. The catalytic sites are hosted primarily by the beta subunits. This Burkholderia cepacia (Pseudomonas cepacia) protein is ATP synthase subunit beta.